The primary structure comprises 238 residues: Hydatid disease diagnostic antigen P-29 (238 aa).

In terms of domain architecture, BAR spans 18–238 (GELVNKNEKT…AKECSMMLGE (221 aa)).

This is Hydatid disease diagnostic antigen P-29 from Echinococcus granulosus (Hydatid tapeworm).